Consider the following 289-residue polypeptide: 4-diphosphocytidyl-2-C-methyl-D-erythritol kinase (289 aa).

Lys10 is an active-site residue. An ATP-binding site is contributed by 94–104; the sequence is PVAAGLAGGSS. The active site involves Asp136.

Belongs to the GHMP kinase family. IspE subfamily.

The catalysed reaction is 4-CDP-2-C-methyl-D-erythritol + ATP = 4-CDP-2-C-methyl-D-erythritol 2-phosphate + ADP + H(+). It participates in isoprenoid biosynthesis; isopentenyl diphosphate biosynthesis via DXP pathway; isopentenyl diphosphate from 1-deoxy-D-xylulose 5-phosphate: step 3/6. Functionally, catalyzes the phosphorylation of the position 2 hydroxy group of 4-diphosphocytidyl-2C-methyl-D-erythritol. This chain is 4-diphosphocytidyl-2-C-methyl-D-erythritol kinase, found in Bacillus licheniformis (strain ATCC 14580 / DSM 13 / JCM 2505 / CCUG 7422 / NBRC 12200 / NCIMB 9375 / NCTC 10341 / NRRL NRS-1264 / Gibson 46).